Here is a 226-residue protein sequence, read N- to C-terminus: Lipid phosphate phosphatase gamma (226 aa).

M1 is subject to N-acetylmethionine. Transmembrane regions (helical) follow at residues 24–44 (LGHF…GGFV), 52–72 (ELQG…NEFI), 102–122 (FMFF…GFWF), 128–148 (WIMN…RVYL), and 152–174 (TVAQ…FWVV).

Belongs to the PA-phosphatase related phosphoesterase family. As to expression, expressed in root tips, root branch points, vascular tissue of cotyledons and leaves, pistil, anthers and filaments.

It localises to the plastid. The protein localises to the chloroplast inner membrane. With respect to regulation, inhibited by Mg(2+). In terms of biological role, exhibits phosphatidate phosphatase (PAP) activity in vitro. May play a primary role as PAP in plastids. This Arabidopsis thaliana (Mouse-ear cress) protein is Lipid phosphate phosphatase gamma (LPPG).